The following is a 239-amino-acid chain: Ribonuclease PH (239 aa).

Residues Arg-87 and 125 to 127 each bind phosphate; that span reads GTR.

Belongs to the RNase PH family. As to quaternary structure, homohexameric ring arranged as a trimer of dimers.

The catalysed reaction is tRNA(n+1) + phosphate = tRNA(n) + a ribonucleoside 5'-diphosphate. Phosphorolytic 3'-5' exoribonuclease that plays an important role in tRNA 3'-end maturation. Removes nucleotide residues following the 3'-CCA terminus of tRNAs; can also add nucleotides to the ends of RNA molecules by using nucleoside diphosphates as substrates, but this may not be physiologically important. Probably plays a role in initiation of 16S rRNA degradation (leading to ribosome degradation) during starvation. In Acaryochloris marina (strain MBIC 11017), this protein is Ribonuclease PH.